The sequence spans 322 residues: Ribosomal RNA small subunit methyltransferase H (322 aa).

S-adenosyl-L-methionine-binding positions include 47–49 (GGH), D67, F93, D112, and Q119.

This sequence belongs to the methyltransferase superfamily. RsmH family.

The protein resides in the cytoplasm. The enzyme catalyses cytidine(1402) in 16S rRNA + S-adenosyl-L-methionine = N(4)-methylcytidine(1402) in 16S rRNA + S-adenosyl-L-homocysteine + H(+). Functionally, specifically methylates the N4 position of cytidine in position 1402 (C1402) of 16S rRNA. This Stenotrophomonas maltophilia (strain K279a) protein is Ribosomal RNA small subunit methyltransferase H.